The following is a 297-amino-acid chain: DNA processing protein DprA (297 aa).

This sequence belongs to the DprA/Smf family. In terms of assembly, interacts with RecA. Interacts with ComFA and ComFC.

It is found in the cytoplasm. Protein that helps load RecA onto ssDNA during transformation. Binds cooperatively to circular ssDNA, is able to bridge different segments of DNA. Favors the loading of RecA onto SsbA- or SsbB-coated ssDNA and formation of RecA-DNA filaments. RecA-ATP cannot catalyze homologous DNA strand exchange; SsbA and DprA activate strand exchange by RecA-ATP. The protein is DNA processing protein DprA of Bacillus subtilis (strain 168).